Reading from the N-terminus, the 266-residue chain is PTS system sorbose-specific EIIC component (266 aa).

Residues methionine 1–isoleucine 237 enclose the PTS EIIC type-4 domain. Helical transmembrane passes span isoleucine 3–valine 23, leucine 33–glycine 53, isoleucine 79–alanine 99, leucine 100–phenylalanine 120, valine 151–leucine 171, glutamine 183–valine 203, and tyrosine 219–isoleucine 239.

Its subcellular location is the cell inner membrane. Functionally, the phosphoenolpyruvate-dependent sugar phosphotransferase system (PTS), a major carbohydrate active transport system, catalyzes the phosphorylation of incoming sugar substrates concomitant with their translocation across the cell membrane. The enzyme II SorABFM PTS system is involved in L-sorbose transport. This chain is PTS system sorbose-specific EIIC component, found in Klebsiella pneumoniae.